Here is a 327-residue protein sequence, read N- to C-terminus: Probable cell division protein WhiA (327 aa).

The H-T-H motif DNA-binding region spans 275-308 (SLEELGRLADPPMTKDAVAGRIRRLLSMADRKAK).

It belongs to the WhiA family.

Its function is as follows. Involved in cell division and chromosome segregation. This chain is Probable cell division protein WhiA, found in Mycobacterium bovis (strain ATCC BAA-935 / AF2122/97).